The primary structure comprises 500 residues: Xylan O-acetyltransferase 2 (500 aa).

At 1–25 the chain is on the cytoplasmic side; the sequence is MGLPGRRNPLLSARRAAASLRRSRR. A helical; Signal-anchor for type II membrane protein membrane pass occupies residues 26–43; that stretch reads LPVYVAAVFFVASVLLMF. The Lumenal segment spans residues 44-500; sequence RDEILYLTTA…RPPAAAGHVA (457 aa). The disordered stretch occupies residues 84-116; the sequence is PVLLGHGGKPEKHHSVTERHRPKVSAKRRPNKK. Residues 91–102 are compositionally biased toward basic and acidic residues; that stretch reads GKPEKHHSVTER. Basic residues predominate over residues 103-116; it reads HRPKVSAKRRPNKK. Disulfide bonds link Cys143–Cys194, Cys165–Cys231, Cys174–Cys472, and Cys388–Cys468. Asn144 and Asn154 each carry an N-linked (GlcNAc...) asparagine glycan. The GDS motif signature appears at 218–220; sequence GDS. Residue Ser220 is the Nucleophile of the active site. Residues Asn260 and Asn416 are each glycosylated (N-linked (GlcNAc...) asparagine). Catalysis depends on Asp467, which acts as the Proton donor. A DXXH motif motif is present at residues 467-470; sequence DCIH. His470 acts as the Proton acceptor in catalysis.

This sequence belongs to the PC-esterase family. TBL subfamily. As to expression, expressed at low levels in roots and leaves.

The protein localises to the golgi apparatus membrane. In terms of biological role, xylan acetyltransferase required for 2-O- and 3-O-monoacetylation of xylosyl residues in xylan. Catalyzes the 2-O-acetylation of xylan, followed by nonenzymatic acetyl migration to the O-3 position, resulting in products that are monoacetylated at both O-2 and O-3 positions. The protein is Xylan O-acetyltransferase 2 of Oryza sativa subsp. japonica (Rice).